A 344-amino-acid chain; its full sequence is Ion-translocating oxidoreductase complex subunit D (344 aa).

4 consecutive transmembrane segments (helical) span residues 23-43, 44-64, 77-99, and 120-140; these read LVLG…GPGT, LLNL…MLAL, SALV…WLTL, and PFNP…LEMT. FMN phosphoryl threonine is present on Thr172. The next 5 helical transmembrane spans lie at 198–218, 222–242, 252–272, 285–305, and 306–326; these read LGSA…LFLL, LFTW…SLLF, GSPL…FIVT, LVFG…GGYP, and DGMA…DYYT.

This sequence belongs to the NqrB/RnfD family. In terms of assembly, the complex is composed of six subunits: RnfA, RnfB, RnfC, RnfD, RnfE and RnfG. It depends on FMN as a cofactor.

Its subcellular location is the cell inner membrane. Functionally, part of a membrane-bound complex that couples electron transfer with translocation of ions across the membrane. The sequence is that of Ion-translocating oxidoreductase complex subunit D from Pseudomonas aeruginosa (strain LESB58).